Consider the following 363-residue polypeptide: Ataxin-3 (363 aa).

Positions Met1 to Met180 constitute a Josephin domain. Residue Cys14 is the Nucleophile of the active site. His119 (proton acceptor) is an active-site residue. The active site involves Asn134. The segment covering Ile192–Val209 has biased composition (basic and acidic residues). Residues Ile192–Ala212 form a disordered region. 3 consecutive UIM domains span residues Glu227–Glu246, Asp247–Ser266, and Ser337–His356. The segment covering Met260 to Ser290 has biased composition (polar residues). The tract at residues Met260 to Lys363 is disordered. Basic and acidic residues predominate over residues Ala353–Lys363.

Widely expressed.

The protein localises to the nucleus matrix. The protein resides in the nucleus. It localises to the lysosome membrane. The enzyme catalyses Thiol-dependent hydrolysis of ester, thioester, amide, peptide and isopeptide bonds formed by the C-terminal Gly of ubiquitin (a 76-residue protein attached to proteins as an intracellular targeting signal).. In terms of biological role, deubiquitinating enzyme involved in protein homeostasis maintenance, transcription, cytoskeleton regulation, myogenesis and degradation of misfolded chaperone substrates. Binds long polyubiquitin chains and trims them, while it has weak or no activity against chains of 4 or less ubiquitins. Involved in degradation of misfolded chaperone substrates via its interaction with STUB1/CHIP: recruited to monoubiquitinated STUB1/CHIP, and restricts the length of ubiquitin chain attached to STUB1/CHIP substrates and preventing further chain extension. Interacts with key regulators of transcription and represses transcription: acts as a histone-binding protein that regulates transcription. Acts as a negative regulator of mTORC1 signaling in response to amino acid deprivation by mediating deubiquitination of RHEB, thereby promoting RHEB inactivation by the TSC-TBC complex. Regulates autophagy via the deubiquitination of 'Lys-402' of BECN1 leading to the stabilization of BECN1. This chain is Ataxin-3 (ATXN3), found in Gallus gallus (Chicken).